Consider the following 526-residue polypeptide: MQSESGIVADFEVGEEFHEEPKTYYELKSQPLKSSSSAEHSGASKPPLSSSTMTSRILLRQQLMREQMQEQERREQQQKLQAAQFMQQRVAVSQTPAINVSVPTTLPSATQVPMEVLKVQTHLENPTKYHIQQAQRHQVKQYLSTTLANKHAGQVLSPPCPNQPGDHAMPPVPGSSAPNSPMAMLTLNSNCEKEAFYKFEEQSRAESECPGMNTHSRASCMQMDDVIDDIISLESSYNEEILGLMDPALQMANTLPVSGNLIDLYSNQGLPPPGLTISNSCPANLPNIKRELTACIFPTESEARALAKERQKKDNHNLIERRRRFNINDRIKELGTLIPKSNDPDMRWNKGTILKASVDYIRKLQREQQRAKDLENRQKKLEHANRHLLLRVQELEMQARAHGLSLIPSTGLCSPDLVNRIIKQEPVLENCSQELVQHQADLTCTTTLDLTDGTISFTNNLGTMPESSPAYSIPRKMASNLEDILMDDALSPVGVTDPLLSSVSPGASKTSSRRSSMSAEETEHAC.

The interval 20–54 is disordered; it reads EPKTYYELKSQPLKSSSSAEHSGASKPPLSSSTMT. Residues 34–44 are compositionally biased toward low complexity; the sequence is SSSSAEHSGAS. Ser180 is subject to Phosphoserine; by MAPK. A Glycyl lysine isopeptide (Lys-Gly) (interchain with G-Cter in SUMO) cross-link involves residue Lys289. The 54-residue stretch at 311–364 folds into the bHLH domain; the sequence is QKKDNHNLIERRRRFNINDRIKELGTLIPKSNDPDMRWNKGTILKASVDYIRKL. Residues 355–401 adopt a coiled-coil conformation; that stretch reads KASVDYIRKLQREQQRAKDLENRQKKLEHANRHLLLRVQELEMQARA. Residues 374 to 395 are leucine-zipper; sequence LENRQKKLEHANRHLLLRVQEL. Ser405 carries the post-translational modification Phosphoserine; by GSK3. Ser414 bears the Phosphoserine mark. Lys423 is covalently cross-linked (Glycyl lysine isopeptide (Lys-Gly) (interchain with G-Cter in SUMO)). Residue Ser491 is modified to Phosphoserine. The segment at 496–526 is disordered; the sequence is TDPLLSSVSPGASKTSSRRSSMSAEETEHAC. Residues 507–519 are compositionally biased toward low complexity; it reads ASKTSSRRSSMSA. A Phosphoserine; by RPS6KA1 modification is found at Ser516.

It belongs to the MiT/TFE family. In terms of assembly, homodimer or heterodimer; dimerization is mediated via the coiled coil region. Efficient DNA binding requires dimerization with another bHLH protein. Binds DNA in the form of homodimer or heterodimer with either TFE3, TFEB or TFEC. Identified in a complex with HINT1 and CTNNB1. Interacts with KARS1. Interacts with VSX2. In terms of processing, phosphorylation at Ser-405 significantly enhances the ability to bind the tyrosinase promoter. Phosphorylated at Ser-180 and Ser-516 following KIT signaling, triggering a short live activation: Phosphorylation at Ser-180 and Ser-516 by MAPK and RPS6KA1, respectively, activate the transcription factor activity but also promote ubiquitination and subsequent degradation by the proteasome. Phosphorylated in response to blue light (415nm). Ubiquitinated following phosphorylation at Ser-180, leading to subsequent degradation by the proteasome. Deubiquitinated by USP13, preventing its degradation.

It localises to the nucleus. It is found in the cytoplasm. Its function is as follows. Transcription factor that regulates the expression of genes with essential roles in cell differentiation, proliferation and survival. Binds to M-boxes (5'-TCATGTG-3') and symmetrical DNA sequences (E-boxes) (5'-CACGTG-3') found in the promoters of target genes, such as BCL2 and tyrosinase (TYR). Plays an important role in melanocyte development by regulating the expression of tyrosinase (TYR) and tyrosinase-related protein 1 (TYRP1). Plays a critical role in the differentiation of various cell types, such as neural crest-derived melanocytes, mast cells, osteoclasts and optic cup-derived retinal pigment epithelium. The chain is Microphthalmia-associated transcription factor (Mitf) from Rattus norvegicus (Rat).